The primary structure comprises 114 residues: Hydrogenase maturation factor HypA (114 aa).

His2 serves as a coordination point for Ni(2+). Zn(2+) is bound by residues Cys73, Cys76, Cys90, and Cys93.

This sequence belongs to the HypA/HybF family.

Involved in the maturation of [NiFe] hydrogenases. Required for nickel insertion into the metal center of the hydrogenase. This Klebsiella pneumoniae subsp. pneumoniae (strain ATCC 700721 / MGH 78578) protein is Hydrogenase maturation factor HypA.